The sequence spans 95 residues: Large ribosomal subunit protein uL23 (95 aa).

It belongs to the universal ribosomal protein uL23 family. Part of the 50S ribosomal subunit. Contacts protein L29, and trigger factor when it is bound to the ribosome.

Its function is as follows. One of the early assembly proteins it binds 23S rRNA. One of the proteins that surrounds the polypeptide exit tunnel on the outside of the ribosome. Forms the main docking site for trigger factor binding to the ribosome. This Anoxybacillus flavithermus (strain DSM 21510 / WK1) protein is Large ribosomal subunit protein uL23.